Here is a 555-residue protein sequence, read N- to C-terminus: Spermine oxidase (555 aa).

Residues Ala-35, Glu-55, Arg-63, 79-80, and Val-261 each bind FAD; that span reads TW. Positions 271 to 307 are disordered; that stretch reads AHPRGPEIEPRGEGDHNHDTGEGGQSGENPQQGRWDE. Basic and acidic residues predominate over residues 274 to 291; it reads RGPEIEPRGEGDHNHDTG. FAD-binding positions include Glu-519 and 528-529; that span reads TT.

This sequence belongs to the flavin monoamine oxidase family. FAD is required as a cofactor. In terms of tissue distribution, widely expressed. Isoform 1 and isoform 2 are expressed at higher level in brain and skeletal muscle. Isoform 7 is found in brain and spleen, isoform 10 is widely expressed but found at lower level in heart, kidney, liver and lung.

The protein resides in the cytoplasm. The protein localises to the nucleus. The enzyme catalyses spermine + O2 + H2O = 3-aminopropanal + spermidine + H2O2. Its pathway is amine and polyamine degradation; spermine degradation. Its function is as follows. Flavoenzyme which catalyzes the oxidation of spermine to spermidine. Can also use N(1)-acetylspermine and spermidine as substrates, with different affinity depending on the isoform (isozyme) and on the experimental conditions. Plays an important role in the regulation of polyamine intracellular concentration and has the potential to act as a determinant of cellular sensitivity to the antitumor polyamine analogs. May contribute to beta-alanine production via aldehyde dehydrogenase conversion of 3-amino-propanal. The chain is Spermine oxidase (Smox) from Mus musculus (Mouse).